Reading from the N-terminus, the 366-residue chain is tRNA pseudouridine synthase B (366 aa).

Residues 1 to 55 form a disordered region; that stretch reads MTVTTPDALLAPHDVQHAGADESAAQIRKPRDNNDPRNANRGGGNGKPRRDKRDV. Asp92 serves as the catalytic Nucleophile.

It belongs to the pseudouridine synthase TruB family. Type 1 subfamily.

The enzyme catalyses uridine(55) in tRNA = pseudouridine(55) in tRNA. Its function is as follows. Responsible for synthesis of pseudouridine from uracil-55 in the psi GC loop of transfer RNAs. This is tRNA pseudouridine synthase B from Rhodopseudomonas palustris (strain ATCC BAA-98 / CGA009).